The sequence spans 97 residues: RNA-binding protein Hfq (97 aa).

The 61-residue stretch at 10 to 70 (DPFLNALRKE…ISTIVPARSV (61 aa)) folds into the Sm domain. Positions 74–97 (HENRPQAAPTSTLVQVETVQQPAE) are disordered. A compositionally biased stretch (polar residues) spans 81 to 97 (APTSTLVQVETVQQPAE).

Belongs to the Hfq family. As to quaternary structure, homohexamer.

Functionally, RNA chaperone that binds small regulatory RNA (sRNAs) and mRNAs to facilitate mRNA translational regulation in response to envelope stress, environmental stress and changes in metabolite concentrations. Also binds with high specificity to tRNAs. This is RNA-binding protein Hfq from Neisseria meningitidis serogroup A / serotype 4A (strain DSM 15465 / Z2491).